Consider the following 375-residue polypeptide: Secondary metabolism regulator laeA (375 aa).

Polar residues predominate over residues 15–26 (ASPNRNNYSYQG). 2 disordered regions span residues 15–37 (ASPN…RSRQ) and 50–75 (QEPP…TSHY).

This sequence belongs to the methyltransferase superfamily. LaeA methyltransferase family. Component of the heterotrimeric velvet complex composed of laeA, veA and velB; VeA acting as a bridging protein between laeA and velB.

The protein resides in the nucleus. The enzyme catalyses L-methionyl-[protein] + S-adenosyl-L-methionine = S-methyl-L-methionyl-[protein] + S-adenosyl-L-homocysteine. In terms of biological role, methyltransferase that performs automethylation. No other methyl-accepting substrate has been identified yet. Component of the velvet transcription factor complex that acts as a global regulator for secondary metabolite gene expression. Controls the expression of the citric acid, demethylkotanin, orlandin, asperrubrol, tensidol B, atromentin and JBIR8 gene clusters. Also represses the expression of genes related to the production of BMS-192548 and aspernigrin A. This Aspergillus niger (strain ATCC 1015 / CBS 113.46 / FGSC A1144 / LSHB Ac4 / NCTC 3858a / NRRL 328 / USDA 3528.7) protein is Secondary metabolism regulator laeA.